Reading from the N-terminus, the 83-residue chain is UPF0248 protein TGAM_1209 (83 aa).

It belongs to the UPF0248 family.

This is UPF0248 protein TGAM_1209 from Thermococcus gammatolerans (strain DSM 15229 / JCM 11827 / EJ3).